A 575-amino-acid chain; its full sequence is Dihydroxy-acid dehydratase (575 aa).

The segment at 1-25 (MPTTDSARAADIKQPDIKPRSRDVT) is disordered. A compositionally biased stretch (basic and acidic residues) spans 8–25 (RAADIKQPDIKPRSRDVT). Cysteine 64 contacts [2Fe-2S] cluster. Position 96 (aspartate 96) interacts with Mg(2+). Cysteine 137 is a binding site for [2Fe-2S] cluster. Aspartate 138 and lysine 139 together coordinate Mg(2+). The residue at position 139 (lysine 139) is an N6-carboxylysine. Cysteine 214 contributes to the [2Fe-2S] cluster binding site. Residue glutamate 465 coordinates Mg(2+). Serine 491 (proton acceptor) is an active-site residue.

It belongs to the IlvD/Edd family. Homodimer. The cofactor is [2Fe-2S] cluster. It depends on Mg(2+) as a cofactor.

It catalyses the reaction (2R)-2,3-dihydroxy-3-methylbutanoate = 3-methyl-2-oxobutanoate + H2O. The catalysed reaction is (2R,3R)-2,3-dihydroxy-3-methylpentanoate = (S)-3-methyl-2-oxopentanoate + H2O. The protein operates within amino-acid biosynthesis; L-isoleucine biosynthesis; L-isoleucine from 2-oxobutanoate: step 3/4. It participates in amino-acid biosynthesis; L-valine biosynthesis; L-valine from pyruvate: step 3/4. In terms of biological role, functions in the biosynthesis of branched-chain amino acids. Catalyzes the dehydration of (2R,3R)-2,3-dihydroxy-3-methylpentanoate (2,3-dihydroxy-3-methylvalerate) into 2-oxo-3-methylpentanoate (2-oxo-3-methylvalerate) and of (2R)-2,3-dihydroxy-3-methylbutanoate (2,3-dihydroxyisovalerate) into 2-oxo-3-methylbutanoate (2-oxoisovalerate), the penultimate precursor to L-isoleucine and L-valine, respectively. The protein is Dihydroxy-acid dehydratase of Mycobacterium avium (strain 104).